The following is a 204-amino-acid chain: Putative AgrB-like protein (204 aa).

The next 5 helical transmembrane spans lie at 52-74, 87-107, 111-131, 151-168, and 173-190; these read YGIA…YLWL, LNCT…FQNI, NWIV…FAPA, AMIG…IPFA, and LIMV…PLTY.

Belongs to the AgrB family.

Its subcellular location is the cell membrane. Its function is as follows. May be involved in the proteolytic processing of a quorum sensing system signal molecule precursor. In Listeria monocytogenes serovar 1/2a (strain ATCC BAA-679 / EGD-e), this protein is Putative AgrB-like protein.